Consider the following 323-residue polypeptide: Aldo-keto reductase family 1 member C18 (323 aa).

Residues 20-24 (GFGTY) and aspartate 50 each bind NADP(+). Residue tyrosine 55 is the Proton donor of the active site. Histidine 117 contributes to the substrate binding site. Residues 166–167 (SN), glutamine 190, 216–221 (YGALGT), and 270–280 (KSFNEERIREN) contribute to the NADP(+) site.

The protein belongs to the aldo/keto reductase family. Monomer. The N-terminus is blocked. In terms of tissue distribution, corpus luteum (large luteal cells).

The protein localises to the cytoplasm. The catalysed reaction is (17R,20S)-17,20-dihydroxypregn-4-en-3-one + NADP(+) = 17alpha-hydroxyprogesterone + NADPH + H(+). The enzyme catalyses (17R,20S)-17,20-dihydroxypregn-4-en-3-one + NAD(+) = 17alpha-hydroxyprogesterone + NADH + H(+). In terms of biological role, catalyzes the conversion of progesterone into 20-alpha-dihydroprogesterone (20 alpha-OHP). In Rattus norvegicus (Rat), this protein is Aldo-keto reductase family 1 member C18 (Akr1c18).